Reading from the N-terminus, the 91-residue chain is uncharacterized protein (91 aa).

The tract at residues 71–91 is disordered; sequence EANDRPSKKCGSGNLRVEKLV.

This is an uncharacterized protein from Archaeoglobus fulgidus (strain ATCC 49558 / DSM 4304 / JCM 9628 / NBRC 100126 / VC-16).